Consider the following 458-residue polypeptide: Purple acid phosphatase 23 (458 aa).

A signal peptide spans 1–19; that stretch reads MTLLIMITLTSISLLLAAA. Residues asparagine 59, asparagine 121, and asparagine 136 are each glycosylated (N-linked (GlcNAc...) asparagine). Aspartate 194 contacts Fe cation. N-linked (GlcNAc...) asparagine glycosylation is present at asparagine 200. Fe cation is bound by residues aspartate 221 and tyrosine 224. Residue aspartate 221 participates in Mn(2+) binding. Residue asparagine 278 coordinates Mn(2+). Asparagine 278 is a binding site for substrate. Asparagine 331 carries an N-linked (GlcNAc...) asparagine glycan. Position 360 (histidine 360) interacts with Mn(2+). The active-site Proton donor is histidine 370. Position 397 (histidine 397) interacts with Mn(2+). 397 to 399 serves as a coordination point for substrate; the sequence is HVH. A Fe cation-binding site is contributed by histidine 399. N-linked (GlcNAc...) asparagine glycosylation is found at asparagine 409 and asparagine 455.

This sequence belongs to the metallophosphoesterase superfamily. Purple acid phosphatase family. Homodimer. The cofactor is Fe cation. Mn(2+) is required as a cofactor. Specifically expressed in flowers.

It localises to the secreted. It catalyses the reaction a phosphate monoester + H2O = an alcohol + phosphate. Its function is as follows. Acid phosphatase activity with ATP, ADP, dATP, pyrophosphate, polyphosphate, phosphoserine and phosphothreonine. Low or no activity with phosphotyrosine, AMP and phytate. This chain is Purple acid phosphatase 23 (PAP23), found in Arabidopsis thaliana (Mouse-ear cress).